The sequence spans 140 residues: Cysteine desulfuration protein SufE (140 aa).

Cys-51 (cysteine persulfide intermediate) is an active-site residue.

Belongs to the SufE family. Homodimer. Interacts with SufS.

It localises to the cytoplasm. The protein operates within cofactor biosynthesis; iron-sulfur cluster biosynthesis. Participates in cysteine desulfuration mediated by SufS. Cysteine desulfuration mobilizes sulfur from L-cysteine to yield L-alanine and constitutes an essential step in sulfur metabolism for biosynthesis of a variety of sulfur-containing biomolecules. Functions as a sulfur acceptor for SufS, by mediating the direct transfer of the sulfur atom from the S-sulfanylcysteine of SufS, an intermediate product of cysteine desulfuration process. This chain is Cysteine desulfuration protein SufE, found in Yersinia pestis bv. Antiqua (strain Antiqua).